A 128-amino-acid polypeptide reads, in one-letter code: Small ribosomal subunit protein bS6 (128 aa).

The protein belongs to the bacterial ribosomal protein bS6 family.

Binds together with bS18 to 16S ribosomal RNA. The sequence is that of Small ribosomal subunit protein bS6 from Geotalea uraniireducens (strain Rf4) (Geobacter uraniireducens).